A 675-amino-acid chain; its full sequence is Anosmin-1 (675 aa).

An N-terminal signal peptide occupies residues methionine 1–glycine 21. Cystine bridges form between cysteine 43/cysteine 77, cysteine 47/cysteine 71, cysteine 80/cysteine 99, cysteine 84/cysteine 95, and cysteine 110/cysteine 114. Asparagine 65 carries N-linked (GlcNAc...) asparagine glycosylation. Residues leucine 121–lysine 170 form the WAP domain. Fibronectin type-III domains are found at residues proline 180–proline 281, alanine 286–aspartate 392, arginine 418–threonine 515, and lysine 545–proline 652. Asparagine 203 and asparagine 294 each carry an N-linked (GlcNAc...) asparagine glycan. Positions serine 388–alanine 402 are enriched in polar residues. The interval serine 388–tyrosine 413 is disordered. 3 N-linked (GlcNAc...) asparagine glycosylation sites follow: asparagine 465, asparagine 548, and asparagine 559. The tract at residues leucine 654–tyrosine 675 is disordered. The segment covering histidine 656 to lysine 669 has biased composition (basic residues).

Mainly expressed in neurons of the central nervous system during the second half of embryonic life. Expressed in mitral neurons of the olfactory bulbs, striatal neurons, Purkinje cells of the cerebellum, retinal neurons and neurons of the brainstem and spinal cord.

It localises to the cell surface. May be an adhesion-like molecule with anti-protease activity. In Gallus gallus (Chicken), this protein is Anosmin-1.